The following is a 252-amino-acid chain: Neurovirulence factor ICP34.5 (252 aa).

Basic residues predominate over residues 1–15 (MARRRRRHRGPRRPR). Positions 1 to 17 (MARRRRRHRGPRRPRPP) are required for nucleolar localization. Disordered regions lie at residues 1 to 129 (MARR…PFRL) and 150 to 179 (RRAGGEGAPEPPATPATPATPATPATPATP). Residues 25-36 (TAQSQVTSTPNS) are compositionally biased toward polar residues. Residues 46 to 59 (AAPPPPPAGGPPPS) are compositionally biased toward pro residues. The segment covering 74–84 (ASDDDDDDDWP) has biased composition (acidic residues). Pro residues-rich tracts occupy residues 85–94 (DSPPPEPAPE) and 120–129 (SHPPSRPFRL). The Nuclear export signal motif lies at 129-138 (LPPRLALRLR). 6 consecutive repeat copies span residues 162–164 (ATP), 165–167 (ATP), 168–170 (ATP), 171–173 (ATP), 174–176 (ATP), and 177–179 (ATP). A 6 X 3 AA tandem repeats of A-T-P region spans residues 162–179 (ATPATPATPATPATPATP). Low complexity predominate over residues 165–179 (ATPATPATPATPATP). The binding to PP1CA stretch occupies residues 179-192 (PARVRFSPHVRVRH). Residues 179-192 (PARVRFSPHVRVRH) form an interaction with host PPP1CA region. Residues 194-252 (VVWASAARLARRGSWARERADRARFRRRVAEAEAVIGPCLGPKARARALARGAGPANSV) form an important for interferon resistance region. Positions 204–222 (RRGSWARERADRARFRRRV) match the Bipartite nuclear localization signal motif. The interval 222–237 (VAEAEAVIGPCLGPKA) is interaction with host EIF2S1/EIF-2ALPHA.

This sequence belongs to the PPP1R15 family. As to quaternary structure, interacts with host PPP1CA to form a high-molecular-weight complex that dephosphorylates EIF2S1/eIF-2alpha. Interacts with host EIF2S1/eIF-2alpha; this interaction is crucial for the specific dephosphorylation of EIF2S1/eIF-2alpha by PPP1CA. Binds to proliferating cell nuclear antigen (PCNA), which may release host cells from growth arrest and facilitate viral replication. Interacts (via N-terminus) with host C1QBP and PRKCA. Interacts with protein UL31. Interacts with host TBK1. Interacts with host STING/TMEM173; this interaction inhibits the intracellular DNA sensing pathway. Interacts with host BECN1; this interaction modulates host autophagy.

The protein localises to the host cytoplasm. The protein resides in the host nucleus. Its subcellular location is the host nucleolus. It is found in the virion. Inhibits the establishment of the immune response and of the integrated stress response (ISR) in the infected cell. Plays essential roles in viral nuclear egress to mediate capsid transit across the nuclear membrane. Facilitates nuclear egress cooperatively with host C1QBP and protein kinase C/PKC to induce lamin A/C phosphorylation and subsequent reorganization. In turn, lamina disassembles and nuclear egress occurs. Recruits the serine/threonine protein phosphatase PPP1CA/PP1-alpha to dephosphorylate the translation initiation factor EIF2S1/eIF-2alpha, thereby couteracting the host shutoff of protein synthesis involving double-stranded RNA-dependent protein kinase EIF2AK2/PKR. In turn, controls host IRF3 activation and subsequently inhibits host interferon response. Controls the DNA sensing pathway by interacting with and inhibiting host STING/TMEM173. Also down-modulates the host MHC class II proteins cell surface expression. Acts as a neurovirulence factor that has a profound effect on the growth of the virus in central nervous system tissue, by interacting with host BECN1 and thereby antagonizing the host autophagy response. The chain is Neurovirulence factor ICP34.5 (RL1) from Human herpesvirus 1 (strain CVG-2) (HHV-1).